Here is a 305-residue protein sequence, read N- to C-terminus: Oxygen-dependent coproporphyrinogen-III oxidase (305 aa).

Serine 98 contacts substrate. Positions 102 and 112 each coordinate a divalent metal cation. The active-site Proton donor is histidine 112. 114–116 contacts substrate; that stretch reads NVR. 2 residues coordinate a divalent metal cation: histidine 151 and histidine 181. The interval 246-281 is important for dimerization; the sequence is YVEFNLVYDRGTLFGLQSGGRTESILMSMPPLARWE. 264–266 is a substrate binding site; that stretch reads GGR.

The protein belongs to the aerobic coproporphyrinogen-III oxidase family. Homodimer. It depends on a divalent metal cation as a cofactor.

It is found in the cytoplasm. The enzyme catalyses coproporphyrinogen III + O2 + 2 H(+) = protoporphyrinogen IX + 2 CO2 + 2 H2O. It participates in porphyrin-containing compound metabolism; protoporphyrin-IX biosynthesis; protoporphyrinogen-IX from coproporphyrinogen-III (O2 route): step 1/1. In terms of biological role, involved in the heme biosynthesis. Catalyzes the aerobic oxidative decarboxylation of propionate groups of rings A and B of coproporphyrinogen-III to yield the vinyl groups in protoporphyrinogen-IX. The polypeptide is Oxygen-dependent coproporphyrinogen-III oxidase (Vibrio vulnificus (strain YJ016)).